The chain runs to 156 residues: Ribosomal RNA large subunit methyltransferase H (156 aa).

Residues leucine 73, glycine 104, and 123–128 each bind S-adenosyl-L-methionine; that span reads ISSMTL.

The protein belongs to the RNA methyltransferase RlmH family. As to quaternary structure, homodimer.

The protein resides in the cytoplasm. The catalysed reaction is pseudouridine(1915) in 23S rRNA + S-adenosyl-L-methionine = N(3)-methylpseudouridine(1915) in 23S rRNA + S-adenosyl-L-homocysteine + H(+). In terms of biological role, specifically methylates the pseudouridine at position 1915 (m3Psi1915) in 23S rRNA. This is Ribosomal RNA large subunit methyltransferase H from Burkholderia lata (strain ATCC 17760 / DSM 23089 / LMG 22485 / NCIMB 9086 / R18194 / 383).